Here is a 184-residue protein sequence, read N- to C-terminus: MIWRSEHIWIELIVGSRKISNFCWAFLLFLGSLGFVLVGTSSYLGKNLISLVSSQQIHFFPQGLVMSFYGIAGLFISSYLWCTISWNVGSGYDRFDRKEGIVCIFRWGFPGKNRRIFLRFRMKDIQSIRIEVKEGIYARRVLYMEIKGQGAIPLTRSDDNLTLREIEQKAAELAYFLRVPIEVF.

The next 2 membrane-spanning stretches (helical) occupy residues 19-39 and 64-84; these read ISNFCWAFLLFLGSLGFVLVG and LVMSFYGIAGLFISSYLWCTI.

The protein belongs to the Ycf4 family.

The protein localises to the plastid. The protein resides in the chloroplast thylakoid membrane. Seems to be required for the assembly of the photosystem I complex. This is Photosystem I assembly protein Ycf4 from Oenothera elata subsp. hookeri (Hooker's evening primrose).